The primary structure comprises 245 residues: Eukaryotic translation initiation factor 6 (245 aa).

It belongs to the eIF-6 family. Monomer. Associates with the 60S ribosomal subunit.

The protein resides in the cytoplasm. It localises to the nucleus. Its subcellular location is the nucleolus. Its function is as follows. Binds to the 60S ribosomal subunit and prevents its association with the 40S ribosomal subunit to form the 80S initiation complex in the cytoplasm. May also be involved in ribosome biogenesis. The sequence is that of Eukaryotic translation initiation factor 6 from Ostreococcus lucimarinus (strain CCE9901).